The sequence spans 574 residues: Protein misato (574 aa).

It belongs to the misato family.

It is found in the mitochondrion. This is Protein misato (mst) from Drosophila melanogaster (Fruit fly).